Reading from the N-terminus, the 178-residue chain is Large ribosomal subunit protein uL6 (178 aa).

Belongs to the universal ribosomal protein uL6 family. In terms of assembly, part of the 50S ribosomal subunit.

In terms of biological role, this protein binds to the 23S rRNA, and is important in its secondary structure. It is located near the subunit interface in the base of the L7/L12 stalk, and near the tRNA binding site of the peptidyltransferase center. The polypeptide is Large ribosomal subunit protein uL6 (Helicobacter pylori (strain P12)).